Reading from the N-terminus, the 56-residue chain is UPF0434 protein Sden_2197 (56 aa).

The protein belongs to the UPF0434 family.

The sequence is that of UPF0434 protein Sden_2197 from Shewanella denitrificans (strain OS217 / ATCC BAA-1090 / DSM 15013).